A 338-amino-acid chain; its full sequence is 1-aminocyclopropane-1-carboxylate deaminase (338 aa).

N6-(pyridoxal phosphate)lysine is present on Lys51. Residue Ser78 is the Nucleophile of the active site.

It belongs to the ACC deaminase/D-cysteine desulfhydrase family. As to quaternary structure, homotrimer. Pyridoxal 5'-phosphate is required as a cofactor.

It catalyses the reaction 1-aminocyclopropane-1-carboxylate + H2O = 2-oxobutanoate + NH4(+). Functionally, catalyzes a cyclopropane ring-opening reaction, the irreversible conversion of 1-aminocyclopropane-1-carboxylate (ACC) to ammonia and alpha-ketobutyrate. Allows growth on ACC as a nitrogen source. The sequence is that of 1-aminocyclopropane-1-carboxylate deaminase from Paraburkholderia phytofirmans (strain DSM 17436 / LMG 22146 / PsJN) (Burkholderia phytofirmans).